The chain runs to 242 residues: Vacuole localized DSC protein 1 (242 aa).

A run of 2 helical transmembrane segments spans residues 128–148 and 152–172; these read PYGF…PTAF and LLLV…INGS.

Part of the vacuole-localized DSC E3 ligase complex composed of at least TUL1, DSC2, DSC3, UBX3, CDC48 and VLD1.

It localises to the vacuole membrane. Its function is as follows. Component of the vacuole-localized DSC E3 ubiquitin ligase complex involved in the targeting of the complex to the vacuole membrane via the AP3 pathway to ubiquinate vacuolar membrane proteins. Competes with GLD1 to determine the subcellular localizations of the DSC complex. The protein is Vacuole localized DSC protein 1 of Saccharomyces cerevisiae (strain ATCC 204508 / S288c) (Baker's yeast).